A 436-amino-acid polypeptide reads, in one-letter code: 3-ketoacyl-CoA thiolase (436 aa).

Residue cysteine 99 is the Acyl-thioester intermediate of the active site. Catalysis depends on proton acceptor residues histidine 392 and cysteine 422.

The protein belongs to the thiolase-like superfamily. Thiolase family. Heterotetramer of two alpha chains (FadJ) and two beta chains (FadI).

The protein localises to the cytoplasm. It catalyses the reaction an acyl-CoA + acetyl-CoA = a 3-oxoacyl-CoA + CoA. It functions in the pathway lipid metabolism; fatty acid beta-oxidation. In terms of biological role, catalyzes the final step of fatty acid oxidation in which acetyl-CoA is released and the CoA ester of a fatty acid two carbons shorter is formed. This Aeromonas salmonicida (strain A449) protein is 3-ketoacyl-CoA thiolase.